The following is a 103-amino-acid chain: Large ribosomal subunit protein bL21 (103 aa).

It belongs to the bacterial ribosomal protein bL21 family. Part of the 50S ribosomal subunit. Contacts protein L20.

In terms of biological role, this protein binds to 23S rRNA in the presence of protein L20. The chain is Large ribosomal subunit protein bL21 from Ruthia magnifica subsp. Calyptogena magnifica.